A 226-amino-acid polypeptide reads, in one-letter code: tRNA (guanine-N(1)-)-methyltransferase (226 aa).

S-adenosyl-L-methionine contacts are provided by residues G110 and 129-134 (IGDYIL).

It belongs to the RNA methyltransferase TrmD family. As to quaternary structure, homodimer.

The protein localises to the cytoplasm. The catalysed reaction is guanosine(37) in tRNA + S-adenosyl-L-methionine = N(1)-methylguanosine(37) in tRNA + S-adenosyl-L-homocysteine + H(+). In terms of biological role, specifically methylates guanosine-37 in various tRNAs. The polypeptide is tRNA (guanine-N(1)-)-methyltransferase (Malacoplasma penetrans (strain HF-2) (Mycoplasma penetrans)).